We begin with the raw amino-acid sequence, 492 residues long: N-succinylglutamate 5-semialdehyde dehydrogenase (492 aa).

220–225 (GSANTG) lines the NAD(+) pocket. Catalysis depends on residues Glu243 and Cys277.

It belongs to the aldehyde dehydrogenase family. AstD subfamily.

It catalyses the reaction N-succinyl-L-glutamate 5-semialdehyde + NAD(+) + H2O = N-succinyl-L-glutamate + NADH + 2 H(+). The protein operates within amino-acid degradation; L-arginine degradation via AST pathway; L-glutamate and succinate from L-arginine: step 4/5. Functionally, catalyzes the NAD-dependent reduction of succinylglutamate semialdehyde into succinylglutamate. In Escherichia coli O6:K15:H31 (strain 536 / UPEC), this protein is N-succinylglutamate 5-semialdehyde dehydrogenase.